The following is a 302-amino-acid chain: tRNA pseudouridine synthase B (302 aa).

D38 serves as the catalytic Nucleophile.

It belongs to the pseudouridine synthase TruB family. Type 1 subfamily.

It catalyses the reaction uridine(55) in tRNA = pseudouridine(55) in tRNA. Responsible for synthesis of pseudouridine from uracil-55 in the psi GC loop of transfer RNAs. The chain is tRNA pseudouridine synthase B from Ligilactobacillus salivarius (strain UCC118) (Lactobacillus salivarius).